Consider the following 217-residue polypeptide: 3,4-dihydroxy-2-butanone 4-phosphate synthase (217 aa).

D-ribulose 5-phosphate contacts are provided by residues arginine 37–glutamate 38, aspartate 42, arginine 150–threonine 154, and glutamate 174. Glutamate 38 is a binding site for Mg(2+). Histidine 153 provides a ligand contact to Mg(2+).

Belongs to the DHBP synthase family. Homodimer. It depends on Mg(2+) as a cofactor. Requires Mn(2+) as cofactor.

It catalyses the reaction D-ribulose 5-phosphate = (2S)-2-hydroxy-3-oxobutyl phosphate + formate + H(+). Its pathway is cofactor biosynthesis; riboflavin biosynthesis; 2-hydroxy-3-oxobutyl phosphate from D-ribulose 5-phosphate: step 1/1. Functionally, catalyzes the conversion of D-ribulose 5-phosphate to formate and 3,4-dihydroxy-2-butanone 4-phosphate. The chain is 3,4-dihydroxy-2-butanone 4-phosphate synthase from Pectobacterium atrosepticum (strain SCRI 1043 / ATCC BAA-672) (Erwinia carotovora subsp. atroseptica).